Here is a 474-residue protein sequence, read N- to C-terminus: UDP-glycosyltransferase 71E1 (474 aa).

UDP-alpha-D-glucose-binding positions include S275, 341-342 (WA), 359-367 (HCGWNSTLE), and 381-384 (YAEQ).

The protein belongs to the UDP-glycosyltransferase family.

May glycosylate diterpenes or flavonols in leaves. The polypeptide is UDP-glycosyltransferase 71E1 (Stevia rebaudiana (Stevia)).